We begin with the raw amino-acid sequence, 257 residues long: AN1-type zinc finger protein 2B (257 aa).

2 AN1-type zinc fingers span residues 4-52 and 94-142; these read PDLG…QKDI and KIFT…HQTS. Zn(2+) is bound by residues Cys-10, Cys-15, Cys-25, Cys-28, Cys-33, His-36, His-42, Cys-44, Cys-100, Cys-105, Cys-115, Cys-118, Cys-123, His-126, His-132, and Cys-134. The tract at residues 141–151 is VCP/p97-interacting motif (VIM); the sequence is TSRAGLAAISR. The disordered stretch occupies residues 152 to 184; it reads AQGLASTSTAPSPSRTLPSSSSPSRATPQLPTR. The span at 155-179 shows a compositional bias: low complexity; sequence LASTSTAPSPSRTLPSSSSPSRATP. Ser-163, Ser-173, and Ser-187 each carry phosphoserine; by MAPK14. UIM domains follow at residues 197–216 and 221–240; these read SEDE…AKPQ and QEED…AEYQ. Cys-254 is modified (cysteine methyl ester). Cys-254 carries the S-geranylgeranyl cysteine lipid modification. The CAAX motif signature appears at 254–257; it reads CSLC. A propeptide spans 255-257 (removed in mature form); it reads SLC.

As to quaternary structure, binds 'Lys-48'-linked polyubiquitin chains of ubiquitinated proteins. Associates with the proteasome complex; upon exposure to arsenite. Interacts (via VIM motif) with VCP; the interaction is direct. Interacts with BAG6. Interacts with IGF1R (nascent precursor form). Interacts with DERL1, FAF2, NPLOC4 and UFD1; probably through VCP. Post-translationally, phosphorylated by MAPK14. Phosphorylation has no effect on association with the proteasome complex.

It is found in the endoplasmic reticulum membrane. Its function is as follows. Plays a role in protein homeostasis by regulating both the translocation and the ubiquitin-mediated proteasomal degradation of nascent proteins at the endoplasmic reticulum. It is involved in the regulation of signal-mediated translocation of proteins into the endoplasmic reticulum. It also plays a role in the ubiquitin-mediated proteasomal degradation of proteins for which signal-mediated translocation to the endoplasmic reticulum has failed. May therefore function in the endoplasmic reticulum stress-induced pre-emptive quality control, a mechanism that selectively attenuates the translocation of newly synthesized proteins into the endoplasmic reticulum and reroutes them to the cytosol for proteasomal degradation. By controlling the steady-state expression of the IGF1R receptor, indirectly regulates the insulin-like growth factor receptor signaling pathway. The polypeptide is AN1-type zinc finger protein 2B (Mus musculus (Mouse)).